A 223-amino-acid polypeptide reads, in one-letter code: Adenylate kinase (223 aa).

10-15 (GSGKGT) serves as a coordination point for ATP. Positions 30-59 (ESGAIFRKHIGGGTELGMKAKEYIDKGELV) are NMP. AMP is bound by residues Ser31, Arg36, 57–59 (ELV), 84–87 (GFPR), and Gln91. The segment at 125-164 (GRRLCENDPNHPNNKFIDAIKPDGDKCRVCGGALSERADD) is LID. An ATP-binding site is contributed by Arg126. Residues Arg161 and Arg173 each coordinate AMP. ATP is bound at residue Gly209.

The protein belongs to the adenylate kinase family. As to quaternary structure, monomer.

The protein localises to the cytoplasm. The catalysed reaction is AMP + ATP = 2 ADP. It functions in the pathway purine metabolism; AMP biosynthesis via salvage pathway; AMP from ADP: step 1/1. Its function is as follows. Catalyzes the reversible transfer of the terminal phosphate group between ATP and AMP. Plays an important role in cellular energy homeostasis and in adenine nucleotide metabolism. The sequence is that of Adenylate kinase from Maridesulfovibrio salexigens (strain ATCC 14822 / DSM 2638 / NCIMB 8403 / VKM B-1763) (Desulfovibrio salexigens).